Consider the following 230-residue polypeptide: RNA chaperone ProQ (230 aa).

Residues 105 to 125 (EAKARVQAQREQHQAKKREAG) show a composition bias toward basic and acidic residues. The tract at residues 105-182 (EAKARVQAQR…EQRKPVTDTT (78 aa)) is disordered. Residues 154–167 (PSRPQAARPASAPR) show a composition bias toward low complexity. Over residues 168–178 (AESRVEQRKPV) the composition is skewed to basic and acidic residues.

This sequence belongs to the ProQ family.

It localises to the cytoplasm. In terms of biological role, RNA chaperone with significant RNA binding, RNA strand exchange and RNA duplexing activities. May regulate ProP activity through an RNA-based, post-transcriptional mechanism. In Erwinia tasmaniensis (strain DSM 17950 / CFBP 7177 / CIP 109463 / NCPPB 4357 / Et1/99), this protein is RNA chaperone ProQ.